The primary structure comprises 345 residues: NADPH dehydrogenase (345 aa).

23 to 26 serves as a coordination point for FMN; the sequence is SPMC. Tyrosine 28 contributes to the substrate binding site. FMN is bound by residues alanine 60 and glutamine 102. 164-167 serves as a coordination point for substrate; that stretch reads HGAH. FMN-binding positions include arginine 215 and 307 to 308; that span reads GR.

This sequence belongs to the NADH:flavin oxidoreductase/NADH oxidase family. NamA subfamily. In terms of assembly, homotetramer. Requires FMN as cofactor.

It catalyses the reaction A + NADPH + H(+) = AH2 + NADP(+). Functionally, catalyzes the reduction of the double bond of an array of alpha,beta-unsaturated aldehydes and ketones. It also reduces the nitro group of nitroester and nitroaromatic compounds. It could have a role in detoxification processes. The sequence is that of NADPH dehydrogenase from Bacillus cereus (strain Q1).